Here is a 436-residue protein sequence, read N- to C-terminus: Hydrogenobyrinate a,c-diamide synthase (436 aa).

Residues 244-435 (RIAVARDDAF…MHVIDFSGEA (192 aa)) form the GATase cobBQ-type domain. Residue cysteine 327 is the Nucleophile of the active site.

It belongs to the CobB/CbiA family. It depends on Mg(2+) as a cofactor.

It carries out the reaction hydrogenobyrinate + 2 L-glutamine + 2 ATP + 2 H2O = hydrogenobyrinate a,c-diamide + 2 L-glutamate + 2 ADP + 2 phosphate + 2 H(+). It functions in the pathway cofactor biosynthesis; adenosylcobalamin biosynthesis; cob(II)yrinate a,c-diamide from precorrin-2 (aerobic route): step 9/10. Catalyzes the ATP-dependent amidation of the two carboxylate groups at positions a and c of hydrogenobyrinate, using either L-glutamine or ammonia as the nitrogen source. The polypeptide is Hydrogenobyrinate a,c-diamide synthase (Brucella suis biovar 1 (strain 1330)).